Here is a 555-residue protein sequence, read N- to C-terminus: MAAAGAAATDLEVVRGKRSALFFAAVAILLGLPLWWKTTETYRAPLPYSDISGLNALLLRLMVPVTVVFTRDSVPLDDQEKLPFTVVHEREIPLKYKMKIKCRFQKAYRRALEHEEEALSLGSVHEAEAMLAEPEKQAEGSLTVYVISEHSSLLPQDMMSYIGPERTAVVRGLIHREAFNIIGRRIVQVAQAMSLTEDVLAAALADHLPEDKWSSDKRRPLKSSLGYEITFSLLNPDPKSHDVHWDIEGAVQRFVQPFLNRLSVAGNFSVDSQILYYAMLGVNPRFDPASSSYSLAMHSLPHVINPVESRLGSSAASLYPVLHFLLYVPELAHSPLYIQDKDGAPVATNAFHSPRWGGIMVYNVDPKIYNASELPVRVEVDMVRVMEVFLAQLRLLFGIAQPQVPPKCLLSGPKSEGLMTWELDRLLWARSVENLATATTTLTSLAQLLGKISNIVIKDDVASEVYRAVAAVQKAAKALALGHLSSAFAASQEAVTSSERAFFDPSLLHLLYFPDDQKFAIYIPLFLPMAVPILLSLVKIFQETRKSWKKPEKID.

At 2 to 18 (AAAGAAATDLEVVRGKR) the chain is on the cytoplasmic side. A cardiolipin is bound by residues R15 and R18. A helical membrane pass occupies residues 19-39 (SALFFAAVAILLGLPLWWKTT). The Lumenal segment spans residues 40-517 (ETYRAPLPYS…LHLLYFPDDQ (478 aa)). 2 N-linked (GlcNAc...) asparagine glycosylation sites follow: N267 and N370. Residues 518-532 (KFAIYIPLFLPMAVP) form a helical membrane-spanning segment. The Cytoplasmic segment spans residues 533–555 (ILLSLVKIFQETRKSWKKPEKID).

This sequence belongs to the PIGS family. Heteropentamer. Part of the GPI-anchor transamidase complex, consisting of PIGK, PIGT, PIGS, PIGU and GAA1.

Its subcellular location is the endoplasmic reticulum membrane. It functions in the pathway glycolipid biosynthesis; glycosylphosphatidylinositol-anchor biosynthesis. Its function is as follows. Component of the glycosylphosphatidylinositol-anchor (GPI-anchor) transamidase (GPI-T) complex that catalyzes the formation of the linkage between a proprotein and a GPI-anchor and participates in GPI anchored protein biosynthesis. The protein is GPI-anchor transamidase component PIGS of Mus musculus (Mouse).